The sequence spans 402 residues: Phosphopentomutase (402 aa).

The Mn(2+) site is built by D10, D301, H306, D342, H343, and H354.

The protein belongs to the phosphopentomutase family. Mn(2+) is required as a cofactor.

The protein resides in the cytoplasm. The catalysed reaction is 2-deoxy-alpha-D-ribose 1-phosphate = 2-deoxy-D-ribose 5-phosphate. The enzyme catalyses alpha-D-ribose 1-phosphate = D-ribose 5-phosphate. It functions in the pathway carbohydrate degradation; 2-deoxy-D-ribose 1-phosphate degradation; D-glyceraldehyde 3-phosphate and acetaldehyde from 2-deoxy-alpha-D-ribose 1-phosphate: step 1/2. Isomerase that catalyzes the conversion of deoxy-ribose 1-phosphate (dRib-1-P) and ribose 1-phosphate (Rib-1-P) to deoxy-ribose 5-phosphate (dRib-5-P) and ribose 5-phosphate (Rib-5-P), respectively. The sequence is that of Phosphopentomutase from Aeromonas hydrophila subsp. hydrophila (strain ATCC 7966 / DSM 30187 / BCRC 13018 / CCUG 14551 / JCM 1027 / KCTC 2358 / NCIMB 9240 / NCTC 8049).